The primary structure comprises 246 residues: Probable transcriptional regulatory protein YebC (246 aa).

Residues Met-1–Lys-20 form a disordered region.

This sequence belongs to the TACO1 family.

It is found in the cytoplasm. The sequence is that of Probable transcriptional regulatory protein YebC from Escherichia coli O6:K15:H31 (strain 536 / UPEC).